The following is a 432-amino-acid chain: Carbohydrate esterase MZ0003 (432 aa).

An N-terminal signal peptide occupies residues 1 to 25 (MQRTCVLIVLIVTSTMWTPDPDVYA). A GXSYXG catalytic site motif motif is present at residues 266–271 (GHSRLG). Ser-268 functions as the Nucleophile in the catalytic mechanism. Substrate is bound by residues Lys-272 and Trp-359. His-409 acts as the Charge relay system in catalysis.

The protein belongs to the carbohydrate esterase 15 (CE15) family. Does not require metal ions for activity. serves as cofactor.

The protein localises to the periplasm. Is inhibited by PMSF and by NaF in vitro, which is consistent with the catalytic nucleophile being a serine. Its function is as follows. Displays some glucuronoyl esterase activity in vitro, since it is able to hydrolyze methyl 4-O-methyl-D-glucopyranosyluronate, allyl D-glucuronate, benzyl D-glucuronate and D-glucuronic acid methyl ester. However, esters of glucuronic acid are probably not its biological substrate, as they are not present in the marine environment. Can also hydrolyze a range of other esters, including p-nitrophenyl acetate. More likely biologically-relevant substrates for MZ0003 and other marine bacterial CE15s are algal cell wall polysaccharides, as these would be readily available in this environment and could be used as energy sources. The chain is Carbohydrate esterase MZ0003 from Unknown prokaryotic organism.